The sequence spans 394 residues: Ribulose bisphosphate carboxylase large chain (394 aa).

Position 5 is an N6,N6,N6-trimethyllysine (Lys-5). Positions 114 and 164 each coordinate substrate. Lys-166 acts as the Proton acceptor in catalysis. Lys-168 provides a ligand contact to substrate. Lys-192, Asp-194, and Glu-195 together coordinate Mg(2+). Lys-192 carries the N6-carboxylysine modification. The Proton acceptor role is filled by His-285. Substrate-binding residues include Arg-286, His-318, and Ser-370.

This sequence belongs to the RuBisCO large chain family. Type I subfamily. In terms of assembly, heterohexadecamer of 8 large chains and 8 small chains; disulfide-linked. The disulfide link is formed within the large subunit homodimers. The cofactor is Mg(2+). The disulfide bond which can form in the large chain dimeric partners within the hexadecamer appears to be associated with oxidative stress and protein turnover.

Its subcellular location is the plastid. It localises to the chloroplast. The enzyme catalyses 2 (2R)-3-phosphoglycerate + 2 H(+) = D-ribulose 1,5-bisphosphate + CO2 + H2O. The catalysed reaction is D-ribulose 1,5-bisphosphate + O2 = 2-phosphoglycolate + (2R)-3-phosphoglycerate + 2 H(+). RuBisCO catalyzes two reactions: the carboxylation of D-ribulose 1,5-bisphosphate, the primary event in carbon dioxide fixation, as well as the oxidative fragmentation of the pentose substrate in the photorespiration process. Both reactions occur simultaneously and in competition at the same active site. The sequence is that of Ribulose bisphosphate carboxylase large chain (rbcL) from Nelumbo lutea (American lotus).